A 404-amino-acid polypeptide reads, in one-letter code: Probable tRNA sulfurtransferase (404 aa).

A THUMP domain is found at 60–165; sequence HEVAESLKEI…DEAAYISYEN (106 aa). Residues 183-184, 208-209, Arg-265, Gly-287, and Gln-296 each bind ATP; these read ML and HF.

It belongs to the ThiI family.

It localises to the cytoplasm. The enzyme catalyses [ThiI sulfur-carrier protein]-S-sulfanyl-L-cysteine + a uridine in tRNA + 2 reduced [2Fe-2S]-[ferredoxin] + ATP + H(+) = [ThiI sulfur-carrier protein]-L-cysteine + a 4-thiouridine in tRNA + 2 oxidized [2Fe-2S]-[ferredoxin] + AMP + diphosphate. The catalysed reaction is [ThiS sulfur-carrier protein]-C-terminal Gly-Gly-AMP + S-sulfanyl-L-cysteinyl-[cysteine desulfurase] + AH2 = [ThiS sulfur-carrier protein]-C-terminal-Gly-aminoethanethioate + L-cysteinyl-[cysteine desulfurase] + A + AMP + 2 H(+). Its pathway is cofactor biosynthesis; thiamine diphosphate biosynthesis. In terms of biological role, catalyzes the ATP-dependent transfer of a sulfur to tRNA to produce 4-thiouridine in position 8 of tRNAs, which functions as a near-UV photosensor. Also catalyzes the transfer of sulfur to the sulfur carrier protein ThiS, forming ThiS-thiocarboxylate. This is a step in the synthesis of thiazole, in the thiamine biosynthesis pathway. The sulfur is donated as persulfide by IscS. In Streptococcus agalactiae serotype III (strain NEM316), this protein is Probable tRNA sulfurtransferase.